Consider the following 430-residue polypeptide: Serine--tRNA ligase (430 aa).

Residue 237–239 participates in L-serine binding; it reads TAE. Residue 268 to 270 participates in ATP binding; it reads RSE. E291 provides a ligand contact to L-serine. 355 to 358 contacts ATP; it reads EISS. S391 is an L-serine binding site.

The protein belongs to the class-II aminoacyl-tRNA synthetase family. Type-1 seryl-tRNA synthetase subfamily. In terms of assembly, homodimer. The tRNA molecule binds across the dimer.

The protein resides in the cytoplasm. The enzyme catalyses tRNA(Ser) + L-serine + ATP = L-seryl-tRNA(Ser) + AMP + diphosphate + H(+). It carries out the reaction tRNA(Sec) + L-serine + ATP = L-seryl-tRNA(Sec) + AMP + diphosphate + H(+). It participates in aminoacyl-tRNA biosynthesis; selenocysteinyl-tRNA(Sec) biosynthesis; L-seryl-tRNA(Sec) from L-serine and tRNA(Sec): step 1/1. In terms of biological role, catalyzes the attachment of serine to tRNA(Ser). Is also able to aminoacylate tRNA(Sec) with serine, to form the misacylated tRNA L-seryl-tRNA(Sec), which will be further converted into selenocysteinyl-tRNA(Sec). The chain is Serine--tRNA ligase from Shigella boydii serotype 18 (strain CDC 3083-94 / BS512).